A 685-amino-acid chain; its full sequence is Methionine--tRNA ligase (685 aa).

The 'HIGH' region motif lies at 15–25 (PYANGPIHLGH). Residues cysteine 146, cysteine 149, cysteine 159, and cysteine 162 each coordinate Zn(2+). The short motif at 331 to 335 (KMSKS) is the 'KMSKS' region element. Lysine 334 is a binding site for ATP. One can recognise a tRNA-binding domain in the interval 583–685 (DFAKMDLRVA…AGVKAGSRVK (103 aa)).

It belongs to the class-I aminoacyl-tRNA synthetase family. MetG type 1 subfamily. Homodimer. Requires Zn(2+) as cofactor.

It is found in the cytoplasm. It catalyses the reaction tRNA(Met) + L-methionine + ATP = L-methionyl-tRNA(Met) + AMP + diphosphate. Its function is as follows. Is required not only for elongation of protein synthesis but also for the initiation of all mRNA translation through initiator tRNA(fMet) aminoacylation. This is Methionine--tRNA ligase from Actinobacillus succinogenes (strain ATCC 55618 / DSM 22257 / CCUG 43843 / 130Z).